A 169-amino-acid polypeptide reads, in one-letter code: Myosin regulatory light chain 11 (169 aa).

At Ala2 the chain carries N,N,N-trimethylalanine. A phosphoserine mark is found at Ser15 and Ser16. A phosphothreonine mark is found at Thr25 and Thr35. The region spanning 25–60 is the EF-hand 1 domain; the sequence is TQIQEFKEAFTVIDQNRDGIIDKEDLRDTFAAMGRL. Ca(2+)-binding residues include Asp38, Asn40, Asp42, and Asp49. Residue Ser75 is modified to Phosphoserine. EF-hand domains lie at 95–130 and 131–166; these read DPED…QCDR and FSQE…GDAK. A Phosphothreonine modification is found at Thr101.

Myosin is a hexamer of 2 heavy chains and 4 light chains. In terms of tissue distribution, expressed in fetal and adult skeletal muscle.

Myosin regulatory subunit that plays an essential role to maintain muscle integrity during early development. Plays a role in muscle contraction. This chain is Myosin regulatory light chain 11, found in Homo sapiens (Human).